Here is a 131-residue protein sequence, read N- to C-terminus: Profilin-4 (131 aa).

A disulfide bond links C13 and C115. An Involved in PIP2 interaction motif is present at residues 81–97 (VVIRGKKGTGGITIKKT). The residue at position 111 (T111) is a Phosphothreonine.

It belongs to the profilin family. As to quaternary structure, occurs in many kinds of cells as a complex with monomeric actin in a 1:1 ratio. Post-translationally, phosphorylated by MAP kinases. Expressed predominantly in endosperm but is also found at low levels in all tissues examined, including mature and germinated pollen.

The protein localises to the cytoplasm. The protein resides in the cytoskeleton. Binds to actin and affects the structure of the cytoskeleton. At high concentrations, profilin prevents the polymerization of actin, whereas it enhances it at low concentrations. By binding to PIP2, it inhibits the formation of IP3 and DG. Has a high affinity for poly-proline. The chain is Profilin-4 (PRO4) from Zea mays (Maize).